Reading from the N-terminus, the 618-residue chain is Isocitrate dehydrogenase kinase/phosphatase (618 aa).

Residues alanine 332–methionine 338 and lysine 353 contribute to the ATP site. Aspartate 388 is a catalytic residue.

It belongs to the AceK family.

It localises to the cytoplasm. It carries out the reaction L-seryl-[isocitrate dehydrogenase] + ATP = O-phospho-L-seryl-[isocitrate dehydrogenase] + ADP + H(+). Functionally, bifunctional enzyme which can phosphorylate or dephosphorylate isocitrate dehydrogenase (IDH) on a specific serine residue. This is a regulatory mechanism which enables bacteria to bypass the Krebs cycle via the glyoxylate shunt in response to the source of carbon. When bacteria are grown on glucose, IDH is fully active and unphosphorylated, but when grown on acetate or ethanol, the activity of IDH declines drastically concomitant with its phosphorylation. This chain is Isocitrate dehydrogenase kinase/phosphatase, found in Methylibium petroleiphilum (strain ATCC BAA-1232 / LMG 22953 / PM1).